A 377-amino-acid polypeptide reads, in one-letter code: Chaperone protein DnaJ (377 aa).

Positions 4-69 (DYYEALGVER…QKRAAYDRFG (66 aa)) constitute a J domain. The CR-type zinc finger occupies 135 to 213 (GKTAQIRVPT…CHGQGRVTQE (79 aa)). Cys148, Cys151, Cys165, Cys168, Cys187, Cys190, Cys201, and Cys204 together coordinate Zn(2+). CXXCXGXG motif repeat units lie at residues 148–155 (CDECSGSG), 165–172 (CTMCSGSG), 187–194 (CPTCNGRG), and 201–208 (CGKCHGQG).

This sequence belongs to the DnaJ family. As to quaternary structure, homodimer. Zn(2+) is required as a cofactor.

It localises to the cytoplasm. Participates actively in the response to hyperosmotic and heat shock by preventing the aggregation of stress-denatured proteins and by disaggregating proteins, also in an autonomous, DnaK-independent fashion. Unfolded proteins bind initially to DnaJ; upon interaction with the DnaJ-bound protein, DnaK hydrolyzes its bound ATP, resulting in the formation of a stable complex. GrpE releases ADP from DnaK; ATP binding to DnaK triggers the release of the substrate protein, thus completing the reaction cycle. Several rounds of ATP-dependent interactions between DnaJ, DnaK and GrpE are required for fully efficient folding. Also involved, together with DnaK and GrpE, in the DNA replication of plasmids through activation of initiation proteins. The chain is Chaperone protein DnaJ from Brucella anthropi (strain ATCC 49188 / DSM 6882 / CCUG 24695 / JCM 21032 / LMG 3331 / NBRC 15819 / NCTC 12168 / Alc 37) (Ochrobactrum anthropi).